The primary structure comprises 202 residues: Oxopyrrolidines biosynthesis cluster protein O (202 aa).

In terms of biological role, part of the gene cluster that mediates the biosynthesis of oxopyrrolidines, polyketide-amino acid hybrid compounds with feature structures of tetramic acid. Does not seem to play a role in oxopyrrolidines A and B biosynthesis. In Penicillium oxalicum (strain 114-2 / CGMCC 5302) (Penicillium decumbens), this protein is Oxopyrrolidines biosynthesis cluster protein O.